The chain runs to 96 residues: Putative defensin-like protein 263 (96 aa).

Residues M1 to A26 form the signal peptide. Disulfide bonds link C48-C96, C67-C86, C73-C91, and C77-C93.

Belongs to the DEFL family.

Its subcellular location is the secreted. The sequence is that of Putative defensin-like protein 263 from Arabidopsis thaliana (Mouse-ear cress).